The primary structure comprises 202 residues: Orotate phosphoribosyltransferase (202 aa).

Residues K93 and 113 to 121 (EDIITTGGS) contribute to the 5-phospho-alpha-D-ribose 1-diphosphate site. Positions 117 and 145 each coordinate orotate.

This sequence belongs to the purine/pyrimidine phosphoribosyltransferase family. PyrE subfamily. As to quaternary structure, homodimer. It depends on Mg(2+) as a cofactor.

It carries out the reaction orotidine 5'-phosphate + diphosphate = orotate + 5-phospho-alpha-D-ribose 1-diphosphate. It participates in pyrimidine metabolism; UMP biosynthesis via de novo pathway; UMP from orotate: step 1/2. Functionally, catalyzes the transfer of a ribosyl phosphate group from 5-phosphoribose 1-diphosphate to orotate, leading to the formation of orotidine monophosphate (OMP). The chain is Orotate phosphoribosyltransferase from Campylobacter jejuni subsp. jejuni serotype O:23/36 (strain 81-176).